We begin with the raw amino-acid sequence, 226 residues long: Ribonuclease 3 (226 aa).

Residues 7-129 form the RNase III domain; sequence LPRLCRTLGY…IIGAIYLDSD (123 aa). Residue glutamate 42 coordinates Mg(2+). Aspartate 46 is an active-site residue. Mg(2+) contacts are provided by aspartate 115 and glutamate 118. Glutamate 118 is a catalytic residue. The DRBM domain maps to 156–226; that stretch reads DAKTLLQEYL…AAQVLELLKK (71 aa).

It belongs to the ribonuclease III family. In terms of assembly, homodimer. It depends on Mg(2+) as a cofactor.

Its subcellular location is the cytoplasm. It carries out the reaction Endonucleolytic cleavage to 5'-phosphomonoester.. Digests double-stranded RNA. Involved in the processing of primary rRNA transcript to yield the immediate precursors to the large and small rRNAs (23S and 16S). Processes some mRNAs, and tRNAs when they are encoded in the rRNA operon. Processes pre-crRNA and tracrRNA of type II CRISPR loci if present in the organism. The polypeptide is Ribonuclease 3 (Shewanella sp. (strain W3-18-1)).